Consider the following 60-residue polypeptide: MLSNIGVPGLILILVIALVIFGPKKLPEIGRAFGETLREFKKSTKGLRDEVLEELDENKK.

Residues 1–21 (MLSNIGVPGLILILVIALVIF) traverse the membrane as a helical segment.

Belongs to the TatA/E family. In terms of assembly, forms a complex with TatC.

The protein resides in the cell membrane. In terms of biological role, part of the twin-arginine translocation (Tat) system that transports large folded proteins containing a characteristic twin-arginine motif in their signal peptide across membranes. TatA could form the protein-conducting channel of the Tat system. This is Sec-independent protein translocase protein TatA from Anoxybacillus flavithermus (strain DSM 21510 / WK1).